Here is a 431-residue protein sequence, read N- to C-terminus: Glutamate-1-semialdehyde 2,1-aminomutase (431 aa).

The residue at position 269 (Lys269) is an N6-(pyridoxal phosphate)lysine.

Belongs to the class-III pyridoxal-phosphate-dependent aminotransferase family. HemL subfamily. In terms of assembly, homodimer. Pyridoxal 5'-phosphate serves as cofactor.

The protein localises to the cytoplasm. It catalyses the reaction (S)-4-amino-5-oxopentanoate = 5-aminolevulinate. It functions in the pathway porphyrin-containing compound metabolism; protoporphyrin-IX biosynthesis; 5-aminolevulinate from L-glutamyl-tRNA(Glu): step 2/2. Its pathway is porphyrin-containing compound metabolism; chlorophyll biosynthesis. The polypeptide is Glutamate-1-semialdehyde 2,1-aminomutase (Chlorobium chlorochromatii (strain CaD3)).